The sequence spans 404 residues: S-adenosylmethionine synthase (404 aa).

Histidine 16 contributes to the ATP binding site. Aspartate 18 is a Mg(2+) binding site. Glutamate 44 contacts K(+). L-methionine-binding residues include glutamate 57 and glutamine 100. Residues 100–110 (QSPEINQGVAR) are flexible loop. Residues 177-179 (DGK), aspartate 257, 263-264 (RK), alanine 280, and lysine 284 contribute to the ATP site. Aspartate 257 contacts L-methionine. Lysine 288 lines the L-methionine pocket.

This sequence belongs to the AdoMet synthase family. Homotetramer; dimer of dimers. The cofactor is Mg(2+). Requires K(+) as cofactor.

It localises to the cytoplasm. The enzyme catalyses L-methionine + ATP + H2O = S-adenosyl-L-methionine + phosphate + diphosphate. It functions in the pathway amino-acid biosynthesis; S-adenosyl-L-methionine biosynthesis; S-adenosyl-L-methionine from L-methionine: step 1/1. Its function is as follows. Catalyzes the formation of S-adenosylmethionine (AdoMet) from methionine and ATP. The overall synthetic reaction is composed of two sequential steps, AdoMet formation and the subsequent tripolyphosphate hydrolysis which occurs prior to release of AdoMet from the enzyme. This is S-adenosylmethionine synthase from Bifidobacterium adolescentis (strain ATCC 15703 / DSM 20083 / NCTC 11814 / E194a).